Reading from the N-terminus, the 119-residue chain is UPF0102 protein CGSHiGG_01960 (119 aa).

It belongs to the UPF0102 family.

In Haemophilus influenzae (strain PittGG), this protein is UPF0102 protein CGSHiGG_01960.